The sequence spans 514 residues: 2,3-bisphosphoglycerate-independent phosphoglycerate mutase (514 aa).

Positions 15 and 65 each coordinate Mn(2+). Ser65 serves as the catalytic Phosphoserine intermediate. Residues His126, 156 to 157 (RD), Arg188, Arg194, 261 to 264 (RADR), and Lys335 each bind substrate. The Mn(2+) site is built by Asp403, His407, Asp444, His445, and His462.

The protein belongs to the BPG-independent phosphoglycerate mutase family. Monomer. Requires Mn(2+) as cofactor.

The catalysed reaction is (2R)-2-phosphoglycerate = (2R)-3-phosphoglycerate. It functions in the pathway carbohydrate degradation; glycolysis; pyruvate from D-glyceraldehyde 3-phosphate: step 3/5. Functionally, catalyzes the interconversion of 2-phosphoglycerate and 3-phosphoglycerate. The chain is 2,3-bisphosphoglycerate-independent phosphoglycerate mutase from Syntrophotalea carbinolica (strain DSM 2380 / NBRC 103641 / GraBd1) (Pelobacter carbinolicus).